The primary structure comprises 258 residues: 5'-nucleotidase SurE (258 aa).

The a divalent metal cation site is built by D13, D14, S44, and N92. Residues 237 to 258 form a disordered region; that stretch reads SPLTAPHSTEHHDALDGIATEF.

It belongs to the SurE nucleotidase family. It depends on a divalent metal cation as a cofactor.

The protein resides in the cytoplasm. It carries out the reaction a ribonucleoside 5'-phosphate + H2O = a ribonucleoside + phosphate. Nucleotidase that shows phosphatase activity on nucleoside 5'-monophosphates. The chain is 5'-nucleotidase SurE from Halobacterium salinarum (strain ATCC 29341 / DSM 671 / R1).